A 360-amino-acid chain; its full sequence is Phenylalanine--tRNA ligase alpha subunit (360 aa).

A Mg(2+)-binding site is contributed by Glu260.

It belongs to the class-II aminoacyl-tRNA synthetase family. Phe-tRNA synthetase alpha subunit type 1 subfamily. As to quaternary structure, tetramer of two alpha and two beta subunits. The cofactor is Mg(2+).

It is found in the cytoplasm. The enzyme catalyses tRNA(Phe) + L-phenylalanine + ATP = L-phenylalanyl-tRNA(Phe) + AMP + diphosphate + H(+). The chain is Phenylalanine--tRNA ligase alpha subunit from Sinorhizobium medicae (strain WSM419) (Ensifer medicae).